The following is a 547-amino-acid chain: Chaperonin GroEL (547 aa).

ATP is bound by residues 30-33 (TLGP), Lys51, 87-91 (DGTTT), Gly415, and Asp495.

The protein belongs to the chaperonin (HSP60) family. As to quaternary structure, forms a cylinder of 14 subunits composed of two heptameric rings stacked back-to-back. Interacts with the co-chaperonin GroES.

It localises to the cytoplasm. It catalyses the reaction ATP + H2O + a folded polypeptide = ADP + phosphate + an unfolded polypeptide.. Functionally, together with its co-chaperonin GroES, plays an essential role in assisting protein folding. The GroEL-GroES system forms a nano-cage that allows encapsulation of the non-native substrate proteins and provides a physical environment optimized to promote and accelerate protein folding. In Allorhizobium ampelinum (strain ATCC BAA-846 / DSM 112012 / S4) (Agrobacterium vitis (strain S4)), this protein is Chaperonin GroEL.